Reading from the N-terminus, the 414-residue chain is D-mannose isomerase (414 aa).

Residues H255 and H390 each act as proton donor/acceptor in the active site.

The protein belongs to the N-acylglucosamine 2-epimerase family. As to quaternary structure, monomer.

The enzyme catalyses D-mannose = D-fructose. With respect to regulation, strongly inhibited by Ag(2+), Cu(2+) and cetyltrimethyl ammonium bromide (CTAB). In terms of biological role, catalyzes the reversible isomerization of D-mannose to D-fructose. Shows high specific activity towards mannose and fructose, and has no detectable activity towards other monosaccharides and disaccharides. This chain is D-mannose isomerase, found in Pseudomonas cannabina pv. alisalensis.